Here is a 239-residue protein sequence, read N- to C-terminus: MILYPAIDLKDGQCVRLLRGEMEAATVFGDDPAAQAAAFEAAGCEWVHLVDLNGAFAGRPVNAAAVEAILARIAVPAQLGGGIRDMATIALWLEKGLARVILGTVAVENPGLVREAARAFPGRVAVGIDARKGRVATKGWATETDVMATDLARSFEDAGVAAIIYTDIDRDGAMAGPNIEATDALARAVSIPVIASGGVSSLADLLALRDTGSIAGAISGRALYDGALDLTQALQALRT.

Residue Asp-8 is the Proton acceptor of the active site. Asp-129 functions as the Proton donor in the catalytic mechanism.

Belongs to the HisA/HisF family.

It localises to the cytoplasm. The catalysed reaction is 1-(5-phospho-beta-D-ribosyl)-5-[(5-phospho-beta-D-ribosylamino)methylideneamino]imidazole-4-carboxamide = 5-[(5-phospho-1-deoxy-D-ribulos-1-ylimino)methylamino]-1-(5-phospho-beta-D-ribosyl)imidazole-4-carboxamide. The protein operates within amino-acid biosynthesis; L-histidine biosynthesis; L-histidine from 5-phospho-alpha-D-ribose 1-diphosphate: step 4/9. The polypeptide is 1-(5-phosphoribosyl)-5-[(5-phosphoribosylamino)methylideneamino] imidazole-4-carboxamide isomerase (Cereibacter sphaeroides (strain ATCC 17029 / ATH 2.4.9) (Rhodobacter sphaeroides)).